A 205-amino-acid chain; its full sequence is Thiamine-phosphate synthase (205 aa).

4-amino-2-methyl-5-(diphosphooxymethyl)pyrimidine-binding positions include 35–39 and N67; that span reads QYRDK. Mg(2+) contacts are provided by D68 and D86. T105 contacts 4-amino-2-methyl-5-(diphosphooxymethyl)pyrimidine. 132–134 lines the 2-[(2R,5Z)-2-carboxy-4-methylthiazol-5(2H)-ylidene]ethyl phosphate pocket; sequence SLT. 4-amino-2-methyl-5-(diphosphooxymethyl)pyrimidine is bound at residue K135. Position 162 (G162) interacts with 2-[(2R,5Z)-2-carboxy-4-methylthiazol-5(2H)-ylidene]ethyl phosphate.

Belongs to the thiamine-phosphate synthase family. Mg(2+) is required as a cofactor.

It carries out the reaction 2-[(2R,5Z)-2-carboxy-4-methylthiazol-5(2H)-ylidene]ethyl phosphate + 4-amino-2-methyl-5-(diphosphooxymethyl)pyrimidine + 2 H(+) = thiamine phosphate + CO2 + diphosphate. The catalysed reaction is 2-(2-carboxy-4-methylthiazol-5-yl)ethyl phosphate + 4-amino-2-methyl-5-(diphosphooxymethyl)pyrimidine + 2 H(+) = thiamine phosphate + CO2 + diphosphate. The enzyme catalyses 4-methyl-5-(2-phosphooxyethyl)-thiazole + 4-amino-2-methyl-5-(diphosphooxymethyl)pyrimidine + H(+) = thiamine phosphate + diphosphate. It functions in the pathway cofactor biosynthesis; thiamine diphosphate biosynthesis; thiamine phosphate from 4-amino-2-methyl-5-diphosphomethylpyrimidine and 4-methyl-5-(2-phosphoethyl)-thiazole: step 1/1. In terms of biological role, condenses 4-methyl-5-(beta-hydroxyethyl)thiazole monophosphate (THZ-P) and 2-methyl-4-amino-5-hydroxymethyl pyrimidine pyrophosphate (HMP-PP) to form thiamine monophosphate (TMP). This Pseudomonas syringae pv. syringae (strain B728a) protein is Thiamine-phosphate synthase.